We begin with the raw amino-acid sequence, 53 residues long: Small, acid-soluble spore protein K (53 aa).

A disordered region spans residues 1 to 53; the sequence is MGRQAEFWSESKNNSKIDGQPKAKARFASKRPNGTINTHPQERMRAANQQEEE.

This sequence belongs to the SspK family.

It is found in the spore core. The protein is Small, acid-soluble spore protein K of Bacillus cytotoxicus (strain DSM 22905 / CIP 110041 / 391-98 / NVH 391-98).